The sequence spans 516 residues: Cytochrome P450 1A2 (516 aa).

The O-linked (GlcNAc) serine glycan is linked to Ser-69. Residue Phe-226 participates in substrate binding. Cys-458 is a binding site for heme.

Belongs to the cytochrome P450 family. In terms of assembly, interacts with PGRMC1; the interaction requires PGRMC1 homodimerization. Heme serves as cofactor.

Its subcellular location is the endoplasmic reticulum membrane. It localises to the microsome membrane. The catalysed reaction is an organic molecule + reduced [NADPH--hemoprotein reductase] + O2 = an alcohol + oxidized [NADPH--hemoprotein reductase] + H2O + H(+). The enzyme catalyses 17beta-estradiol + reduced [NADPH--hemoprotein reductase] + O2 = 2-hydroxy-17beta-estradiol + oxidized [NADPH--hemoprotein reductase] + H2O + H(+). It catalyses the reaction 17beta-estradiol + reduced [NADPH--hemoprotein reductase] + O2 = 4-hydroxy-17beta-estradiol + oxidized [NADPH--hemoprotein reductase] + H2O + H(+). It carries out the reaction estrone + reduced [NADPH--hemoprotein reductase] + O2 = 2-hydroxyestrone + oxidized [NADPH--hemoprotein reductase] + H2O + H(+). The catalysed reaction is estrone + reduced [NADPH--hemoprotein reductase] + O2 = 4-hydroxyestrone + oxidized [NADPH--hemoprotein reductase] + H2O + H(+). The enzyme catalyses cholesterol + reduced [NADPH--hemoprotein reductase] + O2 = 25-hydroxycholesterol + oxidized [NADPH--hemoprotein reductase] + H2O + H(+). It catalyses the reaction all-trans-retinol + reduced [NADPH--hemoprotein reductase] + O2 = all-trans-retinal + oxidized [NADPH--hemoprotein reductase] + 2 H2O + H(+). It carries out the reaction all-trans-retinal + reduced [NADPH--hemoprotein reductase] + O2 = all-trans-retinoate + oxidized [NADPH--hemoprotein reductase] + H2O + 2 H(+). The catalysed reaction is (5Z,8Z,11Z,14Z)-eicosatetraenoate + reduced [NADPH--hemoprotein reductase] + O2 = (14R,15S)-epoxy-(5Z,8Z,11Z)-eicosatrienoate + oxidized [NADPH--hemoprotein reductase] + H2O + H(+). The enzyme catalyses (5Z,8Z,11Z,14Z)-eicosatetraenoate + reduced [NADPH--hemoprotein reductase] + O2 = (14S,15R)-epoxy-(5Z,8Z,11Z)-eicosatrienoate + oxidized [NADPH--hemoprotein reductase] + H2O + H(+). It catalyses the reaction (5Z,8Z,11Z,14Z,17Z)-eicosapentaenoate + reduced [NADPH--hemoprotein reductase] + O2 = (17R,18S)-epoxy-(5Z,8Z,11Z,14Z)-eicosatetraenoate + oxidized [NADPH--hemoprotein reductase] + H2O + H(+). It carries out the reaction (4Z,7Z,10Z,13Z,16Z,19Z)-docosahexaenoate + reduced [NADPH--hemoprotein reductase] + O2 = (19R,20S)-epoxy-(4Z,7Z,10Z,13Z,16Z)-docosapentaenoate + oxidized [NADPH--hemoprotein reductase] + H2O + H(+). The catalysed reaction is (5S)-hydroperoxy-(6E,8Z,11Z,14Z)-eicosatetraenoate = 5-oxo-(6E,8Z,11Z,14Z)-eicosatetraenoate + H2O. The enzyme catalyses (12S)-hydroperoxy-(5Z,8Z,10E,14Z)-eicosatetraenoate = 12-oxo-(5Z,8Z,10E,14Z)-eicosatetraenoate + H2O. It catalyses the reaction (15S)-hydroperoxy-(5Z,8Z,11Z,13E)-eicosatetraenoate = 15-oxo-(5Z,8Z,11Z,13E)-eicosatetraenoate + H2O. It carries out the reaction (13S)-hydroperoxy-(9Z,11E)-octadecadienoate = 13-oxo-(9Z,11E)-octadecadienoate + H2O. The catalysed reaction is (5Z,8Z,11Z,14Z)-eicosatetraenoate + reduced [NADPH--hemoprotein reductase] + O2 = 13-hydroxy-(5Z,8Z,11Z,14Z)-eicosatetraenoate + oxidized [NADPH--hemoprotein reductase] + H2O + H(+). The enzyme catalyses (5Z,8Z,11Z,14Z)-eicosatetraenoate + reduced [NADPH--hemoprotein reductase] + O2 = 19-hydroxy-(5Z,8Z,11Z,14Z)-eicosatetraenoate + oxidized [NADPH--hemoprotein reductase] + H2O + H(+). It catalyses the reaction (9Z,12Z)-octadecadienoate + reduced [NADPH--hemoprotein reductase] + O2 = 11-hydroxy-(9Z,12Z)-octadecadienoate + oxidized [NADPH--hemoprotein reductase] + H2O + H(+). The protein operates within cofactor metabolism; retinol metabolism. It functions in the pathway steroid metabolism; cholesterol metabolism. It participates in lipid metabolism; arachidonate metabolism. In terms of biological role, a cytochrome P450 monooxygenase involved in the metabolism of various endogenous substrates, including fatty acids, steroid hormones and vitamins. Mechanistically, uses molecular oxygen inserting one oxygen atom into a substrate, and reducing the second into a water molecule, with two electrons provided by NADPH via cytochrome P450 reductase (NADPH--hemoprotein reductase). Catalyzes the hydroxylation of carbon-hydrogen bonds. Exhibits high catalytic activity for the formation of hydroxyestrogens from estrone (E1) and 17beta-estradiol (E2), namely 2-hydroxy E1 and E2. Metabolizes cholesterol toward 25-hydroxycholesterol, a physiological regulator of cellular cholesterol homeostasis. May act as a major enzyme for all-trans retinoic acid biosynthesis in the liver. Catalyzes two successive oxidative transformation of all-trans retinol to all-trans retinal and then to the active form all-trans retinoic acid. Primarily catalyzes stereoselective epoxidation of the last double bond of polyunsaturated fatty acids (PUFA), displaying a strong preference for the (R,S) stereoisomer. Catalyzes bisallylic hydroxylation and omega-1 hydroxylation of PUFA. May also participate in eicosanoids metabolism by converting hydroperoxide species into oxo metabolites (lipoxygenase-like reaction, NADPH-independent). Plays a role in the oxidative metabolism of xenobiotics. Catalyzes the N-hydroxylation of heterocyclic amines and the O-deethylation of phenacetin. Metabolizes caffeine via N3-demethylation. This chain is Cytochrome P450 1A2 (CYP1A2), found in Macaca fuscata fuscata (Japanese macaque).